A 492-amino-acid chain; its full sequence is Steroid 21-hydroxylase (492 aa).

The heme b site is built by Arg92 and Lys121. Position 232 (Arg232) interacts with 17alpha-hydroxyprogesterone. Arg232 serves as a coordination point for progesterone. The heme b site is built by His364, Arg425, and Cys427.

Belongs to the cytochrome P450 family. It depends on heme b as a cofactor.

It is found in the endoplasmic reticulum membrane. Its subcellular location is the microsome membrane. The enzyme catalyses progesterone + reduced [NADPH--hemoprotein reductase] + O2 = 21-hydroxyprogesterone + oxidized [NADPH--hemoprotein reductase] + H2O + H(+). The catalysed reaction is 17alpha-hydroxyprogesterone + reduced [NADPH--hemoprotein reductase] + O2 = 11-deoxycortisol + oxidized [NADPH--hemoprotein reductase] + H2O + H(+). Its function is as follows. A cytochrome P450 monooxygenase that plays a major role in adrenal steroidogenesis. Catalyzes the hydroxylation at C-21 of progesterone and 17alpha-hydroxyprogesterone to respectively form 11-deoxycorticosterone and 11-deoxycortisol, intermediate metabolites in the biosynthetic pathway of mineralocorticoids and glucocorticoids. Mechanistically, uses molecular oxygen inserting one oxygen atom into a substrate, and reducing the second into a water molecule, with two electrons provided by NADPH via cytochrome P450 reductase (CPR; NADPH-ferrihemoprotein reductase). The sequence is that of Steroid 21-hydroxylase (CYP21) from Sus scrofa (Pig).